A 429-amino-acid polypeptide reads, in one-letter code: Gamma-glutamyl phosphate reductase (429 aa).

This sequence belongs to the gamma-glutamyl phosphate reductase family.

It localises to the cytoplasm. It catalyses the reaction L-glutamate 5-semialdehyde + phosphate + NADP(+) = L-glutamyl 5-phosphate + NADPH + H(+). The protein operates within amino-acid biosynthesis; L-proline biosynthesis; L-glutamate 5-semialdehyde from L-glutamate: step 2/2. In terms of biological role, catalyzes the NADPH-dependent reduction of L-glutamate 5-phosphate into L-glutamate 5-semialdehyde and phosphate. The product spontaneously undergoes cyclization to form 1-pyrroline-5-carboxylate. The protein is Gamma-glutamyl phosphate reductase of Rhizorhabdus wittichii (strain DSM 6014 / CCUG 31198 / JCM 15750 / NBRC 105917 / EY 4224 / RW1) (Sphingomonas wittichii).